The following is a 116-amino-acid chain: uncharacterized protein (116 aa).

The disordered stretch occupies residues 76-116; the sequence is VPPPRYSYIRSESSRNNLRNSARNQPQNLVSEQDSDSNREN. Residues 85–99 show a composition bias toward low complexity; it reads RSESSRNNLRNSARN.

This is an uncharacterized protein from Glycine max (Soybean).